A 508-amino-acid polypeptide reads, in one-letter code: Photosystem II CP47 reaction center protein (508 aa).

The next 6 helical transmembrane spans lie at 21-36 (SVHI…WAGS), 101-115 (IMFS…IWHW), 140-156 (GIHL…FGAF), 203-218 (IAAG…FHLS), 237-252 (VLSS…AFVV), and 457-472 (SFAL…HGAR).

The protein belongs to the PsbB/PsbC family. PsbB subfamily. PSII is composed of 1 copy each of membrane proteins PsbA, PsbB, PsbC, PsbD, PsbE, PsbF, PsbH, PsbI, PsbJ, PsbK, PsbL, PsbM, PsbT, PsbX, PsbY, PsbZ, Psb30/Ycf12, at least 3 peripheral proteins of the oxygen-evolving complex and a large number of cofactors. It forms dimeric complexes. It depends on Binds multiple chlorophylls. PSII binds additional chlorophylls, carotenoids and specific lipids. as a cofactor.

It localises to the plastid. The protein localises to the chloroplast thylakoid membrane. Its function is as follows. One of the components of the core complex of photosystem II (PSII). It binds chlorophyll and helps catalyze the primary light-induced photochemical processes of PSII. PSII is a light-driven water:plastoquinone oxidoreductase, using light energy to abstract electrons from H(2)O, generating O(2) and a proton gradient subsequently used for ATP formation. The chain is Photosystem II CP47 reaction center protein from Ceratophyllum demersum (Rigid hornwort).